The following is a 1376-amino-acid chain: Major capsid protein (1376 aa).

This sequence belongs to the herpesviridae major capsid protein family. In terms of assembly, homomultimer. Makes the hexons and eleven out of twelve pentons. Interacts with triplex proteins 1/TRX1 and 2/TRX2; adjacent capsomers are linked together in groups of three by triplexes, heterotrimeric complexes composed of one molecule of TRX1 and two molecules of TRX2. Interacts with scaffold protein; this interaction allows efficient MCP transport to the host nucleus. Interacts with capsid vertex component 2/CVC2. Interacts with the small capsomere-interacting protein/SCP.

The protein localises to the virion. It localises to the host nucleus. Self-assembles to form an icosahedral capsid with a T=16 symmetry, about 200 nm in diameter, and consisting of 150 hexons and 12 pentons (total of 162 capsomers). Hexons form the edges and faces of the capsid and are each composed of six MCP molecules. In contrast, one penton is found at each of the 12 vertices. Eleven of the pentons are MCP pentamers, while the last vertex is occupied by the portal complex. The capsid is surrounded by a layer of proteinaceous material designated the tegument which, in turn, is enclosed in an envelope of host cell-derived lipids containing virus-encoded glycoproteins. The sequence is that of Major capsid protein from Equus caballus (Horse).